Here is an 89-residue protein sequence, read N- to C-terminus: Small ribosomal subunit protein uS15 (89 aa).

This sequence belongs to the universal ribosomal protein uS15 family. Part of the 30S ribosomal subunit. Forms a bridge to the 50S subunit in the 70S ribosome, contacting the 23S rRNA.

In terms of biological role, one of the primary rRNA binding proteins, it binds directly to 16S rRNA where it helps nucleate assembly of the platform of the 30S subunit by binding and bridging several RNA helices of the 16S rRNA. Its function is as follows. Forms an intersubunit bridge (bridge B4) with the 23S rRNA of the 50S subunit in the ribosome. The polypeptide is Small ribosomal subunit protein uS15 (Bartonella bacilliformis (strain ATCC 35685 / KC583 / Herrer 020/F12,63)).